Here is a 471-residue protein sequence, read N- to C-terminus: Paraneoplastic antigen-like protein 8A (471 aa).

2 disordered regions span residues 188-300 (SAAG…EGSA) and 321-471 (ASRG…PSAV). Over residues 238-247 (HSRRKRQKKT) the composition is skewed to basic residues. Residues 256–269 (KKSQGSHSHSSASL) show a composition bias toward low complexity. Residues 270-287 (KHPEADDGKNRERLEHVR) show a composition bias toward basic and acidic residues.

The protein belongs to the PNMA family.

The chain is Paraneoplastic antigen-like protein 8A (PNMA8A) from Bos taurus (Bovine).